The chain runs to 276 residues: Shikimate dehydrogenase (NADP(+)) (276 aa).

Residues 15–17 and T62 contribute to the shikimate site; that span reads SKS. The active-site Proton acceptor is the K66. Position 78 (E78) interacts with NADP(+). Shikimate is bound by residues N87 and D103. NADP(+)-binding positions include 128-132 and I217; that span reads GAGGA. A shikimate-binding site is contributed by Y219. Residue G240 coordinates NADP(+).

It belongs to the shikimate dehydrogenase family. In terms of assembly, homodimer.

It catalyses the reaction shikimate + NADP(+) = 3-dehydroshikimate + NADPH + H(+). It participates in metabolic intermediate biosynthesis; chorismate biosynthesis; chorismate from D-erythrose 4-phosphate and phosphoenolpyruvate: step 4/7. In terms of biological role, involved in the biosynthesis of the chorismate, which leads to the biosynthesis of aromatic amino acids. Catalyzes the reversible NADPH linked reduction of 3-dehydroshikimate (DHSA) to yield shikimate (SA). This chain is Shikimate dehydrogenase (NADP(+)), found in Lysinibacillus sphaericus (strain C3-41).